The following is a 281-amino-acid chain: NAD kinase (281 aa).

The Proton acceptor role is filled by Asp61. NAD(+)-binding positions include 61–62 (DG), 134–135 (ND), Arg145, Asp164, 175–180 (TAYSLS), and Gln234.

It belongs to the NAD kinase family. Requires a divalent metal cation as cofactor.

The protein resides in the cytoplasm. It catalyses the reaction NAD(+) + ATP = ADP + NADP(+) + H(+). In terms of biological role, involved in the regulation of the intracellular balance of NAD and NADP, and is a key enzyme in the biosynthesis of NADP. Catalyzes specifically the phosphorylation on 2'-hydroxyl of the adenosine moiety of NAD to yield NADP. This Clostridium botulinum (strain Loch Maree / Type A3) protein is NAD kinase.